The sequence spans 284 residues: 2-dehydro-3-deoxyphosphooctonate aldolase (284 aa).

It belongs to the KdsA family.

Its subcellular location is the cytoplasm. The catalysed reaction is D-arabinose 5-phosphate + phosphoenolpyruvate + H2O = 3-deoxy-alpha-D-manno-2-octulosonate-8-phosphate + phosphate. Its pathway is carbohydrate biosynthesis; 3-deoxy-D-manno-octulosonate biosynthesis; 3-deoxy-D-manno-octulosonate from D-ribulose 5-phosphate: step 2/3. It functions in the pathway bacterial outer membrane biogenesis; lipopolysaccharide biosynthesis. The polypeptide is 2-dehydro-3-deoxyphosphooctonate aldolase (Burkholderia vietnamiensis (strain G4 / LMG 22486) (Burkholderia cepacia (strain R1808))).